The following is a 659-amino-acid chain: A-type ATP synthase subunit I (659 aa).

A run of 8 helical transmembrane segments spans residues 376–396 (FFFG…IISA), 415–435 (IMLW…SYCG), 460–480 (MIAL…GFIV), 489–509 (GAIF…LFAL), 518–538 (LIVK…EVLA), 542–562 (MAVL…LSYA), 568–588 (ALAT…IWGI), and 590–610 (IASV…GHIF).

This sequence belongs to the V-ATPase 116 kDa subunit family. In terms of assembly, has multiple subunits with at least A(3), B(3), C, D, E, F, H, I and proteolipid K(x).

The protein localises to the cell membrane. Functionally, component of the A-type ATP synthase that produces ATP from ADP in the presence of a proton gradient across the membrane. The polypeptide is A-type ATP synthase subunit I (Pyrococcus horikoshii (strain ATCC 700860 / DSM 12428 / JCM 9974 / NBRC 100139 / OT-3)).